The following is a 425-amino-acid chain: Histidine--tRNA ligase (425 aa).

It belongs to the class-II aminoacyl-tRNA synthetase family. In terms of assembly, homodimer.

It is found in the cytoplasm. The catalysed reaction is tRNA(His) + L-histidine + ATP = L-histidyl-tRNA(His) + AMP + diphosphate + H(+). The sequence is that of Histidine--tRNA ligase from Streptomyces coelicolor (strain ATCC BAA-471 / A3(2) / M145).